A 272-amino-acid polypeptide reads, in one-letter code: Shikimate dehydrogenase (NADP(+)) (272 aa).

Residues 14-16 (SKS) and threonine 61 each bind shikimate. The Proton acceptor role is filled by lysine 65. 2 residues coordinate shikimate: asparagine 86 and aspartate 102. NADP(+)-binding positions include 126-130 (GAGGA), 150-155 (NRTASK), and methionine 214. Tyrosine 216 contributes to the shikimate binding site. Glycine 239 contacts NADP(+).

The protein belongs to the shikimate dehydrogenase family. In terms of assembly, homodimer.

The catalysed reaction is shikimate + NADP(+) = 3-dehydroshikimate + NADPH + H(+). It functions in the pathway metabolic intermediate biosynthesis; chorismate biosynthesis; chorismate from D-erythrose 4-phosphate and phosphoenolpyruvate: step 4/7. Functionally, involved in the biosynthesis of the chorismate, which leads to the biosynthesis of aromatic amino acids. Catalyzes the reversible NADPH linked reduction of 3-dehydroshikimate (DHSA) to yield shikimate (SA). This chain is Shikimate dehydrogenase (NADP(+)), found in Pseudoalteromonas atlantica (strain T6c / ATCC BAA-1087).